Consider the following 35-residue polypeptide: Sperm protamine alpha isoform 2 (35 aa).

The interval 1–35 (MPRRRRRASRPIRRRRRARRSTAVRRRRRVVRRRR) is disordered. 2 positions are modified to phosphoserine: S9 and S21.

In terms of processing, phosphorylated in immature sperm. Dephosphorylated in mature sperm allowing a stronger interaction with DNA. As to expression, gonads.

The protein localises to the nucleus. It localises to the chromosome. Protamines substitute for histones in the chromatin of sperm during the haploid phase of spermatogenesis. They compact sperm DNA into a highly condensed, stable and inactive complex. The protein is Sperm protamine alpha isoform 2 of Scomber scombrus (Atlantic mackerel).